A 631-amino-acid polypeptide reads, in one-letter code: Phosphomethylpyrimidine synthase (631 aa).

Residues N239, M268, Y297, H333, 353 to 355 (SRG), 394 to 397 (DGLR), and E433 each bind substrate. H437 contacts Zn(2+). Substrate is bound at residue Y460. H501 lines the Zn(2+) pocket. Residues C581, C584, and C589 each coordinate [4Fe-4S] cluster.

This sequence belongs to the ThiC family. In terms of assembly, homodimer. It depends on [4Fe-4S] cluster as a cofactor.

It carries out the reaction 5-amino-1-(5-phospho-beta-D-ribosyl)imidazole + S-adenosyl-L-methionine = 4-amino-2-methyl-5-(phosphooxymethyl)pyrimidine + CO + 5'-deoxyadenosine + formate + L-methionine + 3 H(+). The protein operates within cofactor biosynthesis; thiamine diphosphate biosynthesis. In terms of biological role, catalyzes the synthesis of the hydroxymethylpyrimidine phosphate (HMP-P) moiety of thiamine from aminoimidazole ribotide (AIR) in a radical S-adenosyl-L-methionine (SAM)-dependent reaction. The protein is Phosphomethylpyrimidine synthase of Escherichia coli (strain 55989 / EAEC).